A 213-amino-acid polypeptide reads, in one-letter code: Thymidylate kinase (213 aa).

An ATP-binding site is contributed by 10-17 (GLEGAGKT).

The protein belongs to the thymidylate kinase family.

The catalysed reaction is dTMP + ATP = dTDP + ADP. Phosphorylation of dTMP to form dTDP in both de novo and salvage pathways of dTTP synthesis. The chain is Thymidylate kinase from Escherichia coli O1:K1 / APEC.